A 237-amino-acid polypeptide reads, in one-letter code: UDP-2,3-diacylglucosamine hydrolase (237 aa).

Mn(2+)-binding residues include Asp9, His11, Asp42, Asn80, and His115. A substrate-binding site is contributed by 80 to 81 (NR). Positions 123, 161, 165, 168, and 196 each coordinate substrate. The Mn(2+) site is built by His196 and His198.

This sequence belongs to the LpxH family. The cofactor is Mn(2+).

Its subcellular location is the cell inner membrane. It catalyses the reaction UDP-2-N,3-O-bis[(3R)-3-hydroxytetradecanoyl]-alpha-D-glucosamine + H2O = 2-N,3-O-bis[(3R)-3-hydroxytetradecanoyl]-alpha-D-glucosaminyl 1-phosphate + UMP + 2 H(+). It participates in glycolipid biosynthesis; lipid IV(A) biosynthesis; lipid IV(A) from (3R)-3-hydroxytetradecanoyl-[acyl-carrier-protein] and UDP-N-acetyl-alpha-D-glucosamine: step 4/6. Its function is as follows. Hydrolyzes the pyrophosphate bond of UDP-2,3-diacylglucosamine to yield 2,3-diacylglucosamine 1-phosphate (lipid X) and UMP by catalyzing the attack of water at the alpha-P atom. Involved in the biosynthesis of lipid A, a phosphorylated glycolipid that anchors the lipopolysaccharide to the outer membrane of the cell. The protein is UDP-2,3-diacylglucosamine hydrolase of Haemophilus influenzae (strain PittGG).